Reading from the N-terminus, the 105-residue chain is Thioredoxin (105 aa).

One can recognise a Thioredoxin domain in the interval 2–105 (VKLIESKEAF…KLEATITEFA (104 aa)). Lysine 3 bears the N6-acetyllysine mark. The residue at position 8 (lysine 8) is an N6-succinyllysine. Catalysis depends on nucleophile residues cysteine 32 and cysteine 35. Cysteine 32 and cysteine 35 are joined by a disulfide. Position 39 is an N6-acetyllysine (lysine 39). Cysteine 62 and cysteine 69 each carry S-nitrosocysteine. Cysteine 73 is subject to S-nitrosocysteine; alternate. Lysine 94 carries the post-translational modification N6-acetyllysine; alternate. Lysine 94 is subject to N6-succinyllysine; alternate.

The protein belongs to the thioredoxin family. Homodimer; disulfide-linked. Interacts with TXNIP through the redox-active site. Interacts with MAP3K5 and CASP3. Interacts with APEX1; the interaction stimulates the FOS/JUN AP-1 DNA-binding activity in a redox-dependent manner. In the fully reduced protein, both Cys-69 and Cys-73 are nitrosylated in response to nitric oxide (NO). When two disulfide bonds are present in the protein, only Cys-73 is nitrosylated. Cys-73 can serve as donor for nitrosylation of target proteins.

Its subcellular location is the nucleus. It is found in the cytoplasm. The protein resides in the secreted. Its function is as follows. Participates in various redox reactions through the reversible oxidation of its active center dithiol to a disulfide and catalyzes dithiol-disulfide exchange reactions. Plays a role in the reversible S-nitrosylation of cysteine residues in target proteins, and thereby contributes to the response to intracellular nitric oxide. Nitrosylates the active site Cys of CASP3 in response to nitric oxide (NO), and thereby inhibits caspase-3 activity. Induces the FOS/JUN AP-1 DNA binding activity in ionizing radiation (IR) cells through its oxidation/reduction status and stimulates AP-1 transcriptional activity. The protein is Thioredoxin (Txn) of Rattus norvegicus (Rat).